Reading from the N-terminus, the 396-residue chain is uncharacterized protein (396 aa).

12 helical membrane-spanning segments follow: residues 8-28, 44-64, 73-93, 97-117, 133-153, 158-178, 213-233, 250-270, 276-296, 304-324, 338-358, and 363-383; these read TASG…ILAS, ISYV…ISGV, PLVV…PLSP, LAFV…AGTY, VLVK…ITFL, MFYG…IIYL, ALII…IWLP, LLSY…VLLN, VFIT…MLTV, ITAF…ITLM, IVAT…GLIA, and IAHI…AAAF.

Belongs to the major facilitator superfamily.

It is found in the cell membrane. This is an uncharacterized protein from Bacillus subtilis (strain 168).